We begin with the raw amino-acid sequence, 155 residues long: MSRRGTAEEKTAKSDPIYRNRLVNMLVNRILKHGKKSLAYQIIYRALKKIQQKTETNPLSVLRQAIRGVTPDIAVKARRVGGSTHQVPIEIGSTQGKALAIRWLLGASRKRPGRNMAFKLSSELVDAAKGSGDAIRKKEETHRMAEANRAFAHFR.

It belongs to the universal ribosomal protein uS7 family. As to quaternary structure, part of the 30S ribosomal subunit.

The protein resides in the plastid. It localises to the chloroplast. In terms of biological role, one of the primary rRNA binding proteins, it binds directly to 16S rRNA where it nucleates assembly of the head domain of the 30S subunit. The chain is Small ribosomal subunit protein uS7cz/uS7cy (rps7-A) from Crucihimalaya wallichii (Rock-cress).